Here is a 499-residue protein sequence, read N- to C-terminus: Glycerol kinase (499 aa).

T13 serves as a coordination point for ADP. The ATP site is built by T13, T14, and S15. Sn-glycerol 3-phosphate is bound at residue T13. R17 contacts ADP. The sn-glycerol 3-phosphate site is built by R83, E84, Y135, and D244. R83, E84, Y135, D244, and Q245 together coordinate glycerol. T266 and G309 together coordinate ADP. Residues T266, G309, Q313, and G410 each coordinate ATP. ADP contacts are provided by G410 and N414.

Belongs to the FGGY kinase family. As to quaternary structure, homotetramer and homodimer (in equilibrium).

It carries out the reaction glycerol + ATP = sn-glycerol 3-phosphate + ADP + H(+). The protein operates within polyol metabolism; glycerol degradation via glycerol kinase pathway; sn-glycerol 3-phosphate from glycerol: step 1/1. Its activity is regulated as follows. Activated by phosphorylation and inhibited by fructose 1,6-bisphosphate (FBP). Its function is as follows. Key enzyme in the regulation of glycerol uptake and metabolism. Catalyzes the phosphorylation of glycerol to yield sn-glycerol 3-phosphate. This chain is Glycerol kinase, found in Brevibacillus brevis (strain 47 / JCM 6285 / NBRC 100599).